A 257-amino-acid chain; its full sequence is Zinc import ATP-binding protein ZnuC (257 aa).

The region spanning 6-221 (VRLEQITVAF…AFVETFGHQV (216 aa)) is the ABC transporter domain. 38 to 45 (GPNGAGKT) is a binding site for ATP.

It belongs to the ABC transporter superfamily. Zinc importer (TC 3.A.1.15.5) family. As to quaternary structure, the complex is composed of two ATP-binding proteins (ZnuC), two transmembrane proteins (ZnuB) and a solute-binding protein (ZnuA).

It localises to the cell inner membrane. It carries out the reaction Zn(2+)(out) + ATP(in) + H2O(in) = Zn(2+)(in) + ADP(in) + phosphate(in) + H(+)(in). Part of the ABC transporter complex ZnuABC involved in zinc import. Responsible for energy coupling to the transport system. The sequence is that of Zinc import ATP-binding protein ZnuC from Marinobacter nauticus (strain ATCC 700491 / DSM 11845 / VT8) (Marinobacter aquaeolei).